Here is a 93-residue protein sequence, read N- to C-terminus: C-C motif chemokine 14 (93 aa).

An N-terminal signal peptide occupies residues 1 to 19 (MKISVAAIPFFLLITIALG). O-linked (GalNAc...) serine; partial glycosylation occurs at Ser-26. 2 cysteine pairs are disulfide-bonded: Cys-35–Cys-59 and Cys-36–Cys-75.

It belongs to the intercrine beta (chemokine CC) family. Post-translationally, the N-terminal processed forms HCC-1(3-74), HCC-1(4-74) and HCC-1(9-74) are produced in small amounts by proteolytic cleavage after secretion in blood. HCC-1(1-74), but not HCC-1(3-74) and HCC-1(4-74), is partially O-glycosylated; the O-linked glycan consists of one Gal-GalNAc disaccharide, further modified by two N-acetylneuraminic acids. As to expression, expressed constitutively in several normal tissues: spleen, liver, skeletal and heart muscle, gut, and bone marrow, present at high concentrations (1-80 nM) in plasma.

Its subcellular location is the secreted. Functionally, has weak activities on human monocytes and acts via receptors that also recognize MIP-1 alpha. It induces intracellular Ca(2+) changes and enzyme release, but no chemotaxis, at concentrations of 100-1,000 nM, and is inactive on T-lymphocytes, neutrophils, and eosinophil leukocytes. Enhances the proliferation of CD34 myeloid progenitor cells. The processed form HCC-1(9-74) is a chemotactic factor that attracts monocytes, eosinophils, and T-cells and is a ligand for CCR1, CCR3 and CCR5. The polypeptide is C-C motif chemokine 14 (CCL14) (Homo sapiens (Human)).